The sequence spans 153 residues: Myosin regulatory light chain LC-2, mantle muscle (153 aa).

Position 1 is a blocked amino end (Ala) (Ala-1). EF-hand domains are found at residues 13 to 48 and 82 to 117; these read RQMQ…LGRV and DPED…MGDN. Residues Asp-26, Asp-28, Asp-30, and Asp-37 each contribute to the Ca(2+) site.

Its function is as follows. In molluscan muscle, calcium regulation is associated with myosin rather than with actin. Muscle myosin contains two types of light chains: the catalytic light chain, essential for ATPase activity, and the regulatory light chain, a calcium-binding protein responsible for Ca(2+) dependent binding and Ca(2+) dependent Mg-ATPase activity. This chain is Myosin regulatory light chain LC-2, mantle muscle, found in Todarodes pacificus (Japanese flying squid).